We begin with the raw amino-acid sequence, 206 residues long: Guanylate kinase (206 aa).

In terms of domain architecture, Guanylate kinase-like spans 5–183 (GNLFVVAAPS…AVFDLKTIVH (179 aa)). 12–19 (APSGAGKS) contacts ATP.

It belongs to the guanylate kinase family.

The protein localises to the cytoplasm. It carries out the reaction GMP + ATP = GDP + ADP. In terms of biological role, essential for recycling GMP and indirectly, cGMP. The sequence is that of Guanylate kinase from Polaromonas sp. (strain JS666 / ATCC BAA-500).